Consider the following 252-residue polypeptide: PHD finger protein ALFIN-LIKE 7 (252 aa).

The tract at residues 141-193 (AKQSKDQSANHNSSRSKSSGGKPRHSESHTKASKMSPPPRKEDESGDEDEDDE) is disordered. The segment covering 149–161 (ANHNSSRSKSSGG) has biased composition (low complexity). The residue at position 176 (S176) is a Phosphoserine. Over residues 184–193 (ESGDEDEDDE) the composition is skewed to acidic residues. The PHD-type zinc-finger motif lies at 195–247 (GAVCGACGDNYGGDEFWICCDACEKWFHGKCVKITPAKAEHIKHYKCPSCTTS).

The protein belongs to the Alfin family. In terms of assembly, interacts with H3K4me3 and to a lesser extent with H3K4me2. As to expression, ubiquitously expressed.

It is found in the nucleus. Histone-binding component that specifically recognizes H3 tails trimethylated on 'Lys-4' (H3K4me3), which mark transcription start sites of virtually all active genes. This is PHD finger protein ALFIN-LIKE 7 (AL7) from Arabidopsis thaliana (Mouse-ear cress).